Here is a 184-residue protein sequence, read N- to C-terminus: NADH dehydrogenase [ubiquinone] 1 alpha subcomplex assembly factor 3 (184 aa).

The protein belongs to the NDUFAF3 family. In terms of assembly, interacts with NDUFAF4, NDUFS2 and NDUFS3.

The protein localises to the nucleus. Its subcellular location is the mitochondrion inner membrane. In terms of biological role, essential factor for the assembly of mitochondrial NADH:ubiquinone oxidoreductase complex (complex I). In Homo sapiens (Human), this protein is NADH dehydrogenase [ubiquinone] 1 alpha subcomplex assembly factor 3 (NDUFAF3).